A 270-amino-acid polypeptide reads, in one-letter code: SAGA-associated factor 29 homolog A (270 aa).

Residue serine 2 is modified to N-acetylserine. The interval 85–113 is disordered; that stretch reads LPSGPTGQQRRKLEGNEQKRKRMKVDTDV. The segment covering 95 to 113 has biased composition (basic and acidic residues); sequence RKLEGNEQKRKRMKVDTDV. The SGF29 C-terminal domain occupies 125-270; that stretch reads EAYASLKGEQ…VVALPEGHRQ (146 aa). 2 histone H3K4me3 N-terminus binding regions span residues 168–170 and 217–220; these read DEE and GTTA. The segment at 242-245 is histone H3K4me3 binding; that stretch reads FDDD.

The protein belongs to the SGF29 family. In terms of tissue distribution, expressed in roots, rosette leaves, cauline leaves, stems and flowers.

It is found in the nucleus. Chromatin reader component of the transcription regulatory histone acetylation (HAT) complex SAGA. Involved in salt stress tolerance. Enhances the effect of ADA2B in the positive regulation of salt-induced gene expression. This is SAGA-associated factor 29 homolog A from Arabidopsis thaliana (Mouse-ear cress).